Reading from the N-terminus, the 235-residue chain is Large ribosomal subunit protein uL1 (235 aa).

The protein belongs to the universal ribosomal protein uL1 family. As to quaternary structure, part of the 50S ribosomal subunit.

Functionally, binds directly to 23S rRNA. The L1 stalk is quite mobile in the ribosome, and is involved in E site tRNA release. In terms of biological role, protein L1 is also a translational repressor protein, it controls the translation of the L11 operon by binding to its mRNA. The polypeptide is Large ribosomal subunit protein uL1 (Prochlorococcus marinus (strain AS9601)).